Consider the following 347-residue polypeptide: MDENKKRALSVALSQIEKQFGKGSVMRMGDRVIEAVEAIPTGSLMLDLALGIGGLPKGRVVEIYGPESSGKTTLTLQAIAQCQKKGGTAAFIDAEHALDPIYAGKLGVNVDDLLLSQPDTGEQALEIADMLVRSGSIDIMVIDSVAALTPKAEIEGEMGDQLPGLQARLMSQALRKLTGNIKRSNTLVIFINQLRMKIGIMMPGQSPETTTGGNALKFYASVRLDIRRIGAIKKGDEIIGNQTKIKVVKNKLAPPFKQVVTEILYGEGISREGELIEMGVEAKLVEKAGAWYSYGGERIGQGKDNARGYLRENPHLAAKLEADLREKFEPTELSREEGDEDTLEDAM.

Residue G65–T72 coordinates ATP. The segment covering K327–E336 has biased composition (basic and acidic residues). The disordered stretch occupies residues K327–M347. A compositionally biased stretch (acidic residues) spans E337–M347.

This sequence belongs to the RecA family.

The protein localises to the cytoplasm. Its function is as follows. Can catalyze the hydrolysis of ATP in the presence of single-stranded DNA, the ATP-dependent uptake of single-stranded DNA by duplex DNA, and the ATP-dependent hybridization of homologous single-stranded DNAs. It interacts with LexA causing its activation and leading to its autocatalytic cleavage. In Xylella fastidiosa (strain M12), this protein is Protein RecA.